The chain runs to 243 residues: Cytochrome c1, heme protein (243 aa).

Residues 1-201 (GVDSHPPALP…CSNPWWDERK (201 aa)) are Mitochondrial intermembrane-facing. Residues 5–194 (HPPALPWPHF…VTCFLEWCSN (190 aa)) form the Cytochrome c domain. 3 residues coordinate heme: cysteine 39, histidine 40, and methionine 159. A helical transmembrane segment spans residues 202–221 (LLGYKTIATLAVIAVSSGYY). The Mitochondrial matrix portion of the chain corresponds to 222–243 (NRFLSGLWRSRRLAFRPFNYSK).

It belongs to the cytochrome c family. As to quaternary structure, component of the ubiquinol-cytochrome c oxidoreductase (cytochrome b-c1 complex, complex III, CIII), a multisubunit enzyme composed of 3 respiratory subunits cytochrome b, cytochrome c1 and Rieske protein, 2 core protein subunits, and additional low-molecular weight protein subunits. The complex exists as an obligatory dimer and forms supercomplexes (SCs) in the inner mitochondrial membrane with cytochrome c oxidase (complex IV, CIV). Heme is required as a cofactor.

It localises to the mitochondrion inner membrane. The catalysed reaction is a quinol + 2 Fe(III)-[cytochrome c](out) = a quinone + 2 Fe(II)-[cytochrome c](out) + 2 H(+)(out). Its function is as follows. Component of the ubiquinol-cytochrome c oxidoreductase, a multisubunit transmembrane complex that is part of the mitochondrial electron transport chain which drives oxidative phosphorylation. The respiratory chain contains 3 multisubunit complexes succinate dehydrogenase (complex II, CII), ubiquinol-cytochrome c oxidoreductase (cytochrome b-c1 complex, complex III, CIII) and cytochrome c oxidase (complex IV, CIV), that cooperate to transfer electrons derived from NADH and succinate to molecular oxygen, creating an electrochemical gradient over the inner membrane that drives transmembrane transport and the ATP synthase. The cytochrome b-c1 complex catalyzes electron transfer from ubiquinol to cytochrome c, linking this redox reaction to translocation of protons across the mitochondrial inner membrane, with protons being carried across the membrane as hydrogens on the quinol. In the process called Q cycle, 2 protons are consumed from the matrix, 4 protons are released into the intermembrane space and 2 electrons are passed to cytochrome c. Cytochrome c1 is a catalytic core subunit containing a c-type heme. It transfers electrons from the [2Fe-2S] iron-sulfur cluster of the Rieske protein to cytochrome c. In Euglena gracilis, this protein is Cytochrome c1, heme protein.